The sequence spans 412 residues: Multifunctional CCA protein (412 aa).

Residues Gly8 and Arg11 each coordinate ATP. Residues Gly8 and Arg11 each contribute to the CTP site. Residues Asp21 and Asp23 each contribute to the Mg(2+) site. The ATP site is built by Arg91, Arg137, and Arg140. CTP-binding residues include Arg91, Arg137, and Arg140. One can recognise an HD domain in the interval 228–329 (TGIHTLMTLS…VKLFDSIDAW (102 aa)).

This sequence belongs to the tRNA nucleotidyltransferase/poly(A) polymerase family. Bacterial CCA-adding enzyme type 1 subfamily. In terms of assembly, monomer. Can also form homodimers and oligomers. Mg(2+) is required as a cofactor. It depends on Ni(2+) as a cofactor.

It catalyses the reaction a tRNA precursor + 2 CTP + ATP = a tRNA with a 3' CCA end + 3 diphosphate. The enzyme catalyses a tRNA with a 3' CCA end + 2 CTP + ATP = a tRNA with a 3' CCACCA end + 3 diphosphate. Functionally, catalyzes the addition and repair of the essential 3'-terminal CCA sequence in tRNAs without using a nucleic acid template. Adds these three nucleotides in the order of C, C, and A to the tRNA nucleotide-73, using CTP and ATP as substrates and producing inorganic pyrophosphate. tRNA 3'-terminal CCA addition is required both for tRNA processing and repair. Also involved in tRNA surveillance by mediating tandem CCA addition to generate a CCACCA at the 3' terminus of unstable tRNAs. While stable tRNAs receive only 3'-terminal CCA, unstable tRNAs are marked with CCACCA and rapidly degraded. This Escherichia coli O7:K1 (strain IAI39 / ExPEC) protein is Multifunctional CCA protein.